Consider the following 414-residue polypeptide: Ceramide synthase 5 (414 aa).

Topologically, residues 1–43 (MATAAAETLGLLWGWLWSESFWLPQNVSWADLEGPGDGYGYPR) are lumenal. N-linked (GlcNAc...) asparagine glycosylation is present at Asn-26. A helical transmembrane segment spans residues 44–64 (AQHVLSVFPLAVCIFSVRMLF). Residues 75–136 (RVGIKDSPVN…RHRRNQDKPP (62 aa)) are homeobox-like. In terms of domain architecture, TLC spans 139-340 (TKFCESMWRF…IVQTASKALS (202 aa)). 4 helical membrane-spanning segments follow: residues 148–168 (FTYY…MPWF), 187–207 (LYYY…SQFI), 214–234 (FLMM…SYVN), and 272–292 (LFVI…PLWI). Positions 299-309 (ESWEIIGPYPS) match the Last loop motif motif. Residues 312–332 (LFNALLLILQVLHAIWSYLIV) traverse the membrane as a helical segment. Residues 333 to 414 (QTASKALSRG…RASPHLHSCD (82 aa)) lie on the Cytoplasmic side of the membrane. A disordered region spans residues 347–373 (DDRSDVESSSEEEDETTHKNNLSGSSS).

In terms of assembly, interacts with PAQR4; the interaction regulates the stability and activity of CERS5 and is inhibited in presence of ceramides. In terms of processing, phosphorylated at the C-terminus by CK2. Ubiquitously expressed, with highest levels in testis and kidney. Expressed in pulmonary epithelia.

It is found in the endoplasmic reticulum membrane. The enzyme catalyses a sphingoid base + hexadecanoyl-CoA = an N-hexadecanoyl-sphingoid base + CoA + H(+). It catalyses the reaction sphinganine + hexadecanoyl-CoA = N-hexadecanoylsphinganine + CoA + H(+). It carries out the reaction hexadecasphinganine + hexadecanoyl-CoA = N-hexadecanoylhexadecasphinganine + CoA + H(+). The catalysed reaction is sphing-4-enine + hexadecanoyl-CoA = N-hexadecanoylsphing-4-enine + CoA + H(+). The enzyme catalyses 2-hydroxyhexadecanoyl-CoA + sphinganine = N-(2-hydroxyhexadecanoyl)-sphinganine + CoA + H(+). It catalyses the reaction sphinganine + tetradecanoyl-CoA = N-(tetradecanoyl)-sphinganine + CoA + H(+). It carries out the reaction sphinganine + octadecanoyl-CoA = N-(octadecanoyl)-sphinganine + CoA + H(+). The catalysed reaction is sphinganine + (9Z)-octadecenoyl-CoA = N-(9Z-octadecenoyl)-sphinganine + CoA + H(+). The enzyme catalyses a fatty acyl-CoA + sphing-4-enine = an N-acylsphing-4-enine + CoA + H(+). It catalyses the reaction tetracosenoyl-CoA + sphing-4-enine = N-(tetracosenoyl)-sphing-4-enine + CoA + H(+). The protein operates within lipid metabolism; sphingolipid metabolism. Its activity is regulated as follows. Inhibited by fumonisin B1. Ceramide synthase that catalyzes the transfer of the acyl chain from acyl-CoA to a sphingoid base, with high selectivity toward palmitoyl-CoA (hexadecanoyl-CoA; C16:0-CoA). Can use other acyl donors, but with less efficiency. N-acylates sphinganine and sphingosine bases to form dihydroceramides and ceramides in de novo synthesis and salvage pathways, respectively. Plays a role in de novo ceramide synthesis and surfactant homeostasis in pulmonary epithelia. The polypeptide is Ceramide synthase 5 (Mus musculus (Mouse)).